Reading from the N-terminus, the 747-residue chain is Protein Niban 2 (747 aa).

Gly2 carries N-myristoyl glycine lipidation. In terms of domain architecture, PH spans 68–192; sequence RIIFSGNLFQ…WQAVLQDCVR (125 aa). Residues Ser568 and Ser574 each carry the phosphoserine modification. The interval 589–747 is disordered; it reads WGEQYGDGGD…EDSAGVQTEF (159 aa). The segment covering 593–602 has biased composition (gly residues); sequence YGDGGDGSDS. Phosphoserine is present on residues Ser605, Ser626, Ser641, Ser645, Ser648, Ser667, Ser672, Ser683, Ser693, and Ser697. Basic and acidic residues predominate over residues 708 to 722; it reads VDLEPPKPSDQETGE. The span at 734–747 shows a compositional bias: polar residues; that stretch reads HTTTEDSAGVQTEF.

The protein belongs to the Niban family. In terms of processing, as apoptosis proceeds, degraded via an proteasome-independent pathway, probably by caspases.

It is found in the cytoplasm. Its subcellular location is the cytosol. It localises to the cell junction. The protein resides in the adherens junction. The protein localises to the membrane. May play a role in apoptosis suppression. This Rattus norvegicus (Rat) protein is Protein Niban 2.